The following is a 563-amino-acid chain: Proton channel OTOP2 (563 aa).

The tract at residues 1–20 (MSEELVPHPNESLPGPRASP) is disordered. 12 helical membrane-spanning segments follow: residues 30-50 (LLSV…ISGG), 62-82 (VFAL…FYLL), 100-120 (PIWL…MDVF), 137-157 (ILHP…LWIS), 173-193 (LMFT…DESV), 242-262 (FYLY…LYVM), 290-310 (FFAG…VFIL), 325-345 (ALVI…LVSL), 373-393 (LMGA…AVVV), 403-423 (LNLS…VFII), 496-516 (DISL…AFGA), and 528-548 (FYGY…GIFY).

It belongs to the otopetrin family. Expressed at higher level in stomach, testis and olfactory bulb.

The protein localises to the cell membrane. The catalysed reaction is H(+)(in) = H(+)(out). Its activity is regulated as follows. Actives at neutral and alkaline extracellular pH, acid extracellular pH appears to inhibit the channel. Insensitive to activation by Zn(2+). In terms of biological role, proton-selective ion channel open at neutral pH. Actives at neutral and alkaline extracellular pH, likely participates in some alkali-related physiological activities. This Mus musculus (Mouse) protein is Proton channel OTOP2.